Consider the following 145-residue polypeptide: Transcription antitermination protein NusB (145 aa).

This sequence belongs to the NusB family.

Involved in transcription antitermination. Required for transcription of ribosomal RNA (rRNA) genes. Binds specifically to the boxA antiterminator sequence of the ribosomal RNA (rrn) operons. The polypeptide is Transcription antitermination protein NusB (Geobacter sp. (strain M21)).